Reading from the N-terminus, the 380-residue chain is Cytochrome b (380 aa).

The next 4 helical transmembrane spans lie at 34–54 (FGSL…LLAM), 78–99 (WLIR…YFHI), 114–134 (WNTG…GYVL), and 179–199 (FFAL…IHLT). Heme b-binding residues include His84 and His98. Residues His183 and His197 each coordinate heme b. A ubiquinone is bound at residue His202. The next 4 helical transmembrane spans lie at 227–247 (LKDI…ALFS), 289–309 (LGGV…PFLH), 321–341 (ISQL…WVGS), and 348–368 (FIII…VLFP).

It belongs to the cytochrome b family. The cytochrome bc1 complex contains 11 subunits: 3 respiratory subunits (MT-CYB, CYC1 and UQCRFS1), 2 core proteins (UQCRC1 and UQCRC2) and 6 low-molecular weight proteins (UQCRH/QCR6, UQCRB/QCR7, UQCRQ/QCR8, UQCR10/QCR9, UQCR11/QCR10 and a cleavage product of UQCRFS1). This cytochrome bc1 complex then forms a dimer. The cofactor is heme b.

It is found in the mitochondrion inner membrane. In terms of biological role, component of the ubiquinol-cytochrome c reductase complex (complex III or cytochrome b-c1 complex) that is part of the mitochondrial respiratory chain. The b-c1 complex mediates electron transfer from ubiquinol to cytochrome c. Contributes to the generation of a proton gradient across the mitochondrial membrane that is then used for ATP synthesis. In Pachyptila salvini (Salvin's prion), this protein is Cytochrome b (MT-CYB).